The primary structure comprises 1174 residues: RecBCD enzyme subunit RecB (1174 aa).

Residues 1-852 are DNA-binding and helicase activity, interacts with RecC; the sequence is MKIDSLKEKL…GGKTMNYEGL (852 aa). The UvrD-like helicase ATP-binding domain maps to 4–449; it reads DSLKEKLNIF…YYLDTNWRSS (446 aa). ATP is bound at residue 25 to 32; sequence ASAGTGKT. Residues 479 to 745 form the UvrD-like helicase C-terminal domain; it reads PSSKNLKMNF…KIITIHKSKG (267 aa). The nuclease activity, interacts with RecD and RecA stretch occupies residues 900–1174; sequence TWSITSFSQL…LIKKTMTLIS (275 aa). 3 residues coordinate Mg(2+): H957, D1068, and D1081. D1081 acts as the For nuclease activity in catalysis.

The protein belongs to the helicase family. UvrD subfamily. Heterotrimer of RecB, RecC and RecD. All subunits contribute to DNA-binding. Interacts with RecA. The cofactor is Mg(2+).

It carries out the reaction Exonucleolytic cleavage (in the presence of ATP) in either 5'- to 3'- or 3'- to 5'-direction to yield 5'-phosphooligonucleotides.. The enzyme catalyses Couples ATP hydrolysis with the unwinding of duplex DNA by translocating in the 3'-5' direction.. It catalyses the reaction ATP + H2O = ADP + phosphate + H(+). In terms of biological role, a helicase/nuclease that prepares dsDNA breaks (DSB) for recombinational DNA repair. Binds to DSBs and unwinds DNA via a highly rapid and processive ATP-dependent bidirectional helicase activity. Unwinds dsDNA until it encounters a Chi (crossover hotspot instigator) sequence from the 3' direction. Cuts ssDNA a few nucleotides 3' to the Chi site. The properties and activities of the enzyme are changed at Chi. The Chi-altered holoenzyme produces a long 3'-ssDNA overhang and facilitates RecA-binding to the ssDNA for homologous DNA recombination and repair. Holoenzyme degrades any linearized DNA that is unable to undergo homologous recombination. In the holoenzyme this subunit contributes ATPase, 3'-5' helicase, exonuclease activity and loads RecA onto ssDNA. This is RecBCD enzyme subunit RecB from Buchnera aphidicola subsp. Acyrthosiphon pisum (strain APS) (Acyrthosiphon pisum symbiotic bacterium).